The primary structure comprises 101 residues: Interleukin-8 (101 aa).

The first 22 residues, 1–22 (MTSKLAVALLAAFVLSAALCEA), serve as a signal peptide directing secretion. R27 is subject to Citrulline. Intrachain disulfides connect C34/C61 and C36/C77.

The protein belongs to the intercrine alpha (chemokine CxC) family. As to quaternary structure, homodimer. Interacts with TNFAIP6 (via Link domain); this interaction interferes with chemokine binding to glycosaminoglycans. In terms of processing, citrullination at Arg-27 prevents proteolysis, and dampens tissue inflammation, it also enhances leukocytosis, possibly through impaired chemokine clearance from the blood circulation.

It localises to the secreted. Chemotactic factor that mediates inflammatory response by attracting neutrophils, basophils, and T-cells to clear pathogens and protect the host from infection. Also plays an important role in neutrophil activation. Released in response to an inflammatory stimulus, exerts its effect by binding to the G-protein-coupled receptors CXCR1 and CXCR2, primarily found in neutrophils, monocytes and endothelial cells. G-protein heterotrimer (alpha, beta, gamma subunits) constitutively binds to CXCR1/CXCR2 receptor and activation by IL8 leads to beta and gamma subunits release from Galpha (GNAI2 in neutrophils) and activation of several downstream signaling pathways including PI3K and MAPK pathways. The sequence is that of Interleukin-8 (CXCL8) from Canis lupus familiaris (Dog).